The sequence spans 397 residues: uncharacterized protein (397 aa).

The next 12 helical transmembrane spans lie at 10 to 30 (FIIFVLMICTFSIGYTEYAVM), 48 to 68 (GLLVTAYAASVCLTGPLVTII), 76 to 96 (PVLLGLMAIFILSNLMSALAP), 106 to 126 (ILSASIHGAFFAIAMVFASEM), 141 to 161 (GGLTVALMLGVPFGSYLGDVL), 165 to 185 (AVFSIITALGVIGFLGLMAAV), 209 to 229 (LFSFAITILGYSGVFIAYTFI), 242 to 262 (VGITGALFAYGLGGVAGNFFA), 274 to 294 (MIGVMIGLIGVLAVFPYIAIY), 296 to 316 (AAAIVATFLFGACAFGTPPLL), 334 to 354 (VSVSAFNLANALGAWIGGMIL), and 363 to 383 (LFAGGALMTACGLVLSTFAHL).

Belongs to the major facilitator superfamily.

The protein localises to the cell membrane. This is an uncharacterized protein from Bacillus subtilis (strain 168).